A 344-amino-acid polypeptide reads, in one-letter code: tRNA N6-adenosine threonylcarbamoyltransferase (344 aa).

Fe cation contacts are provided by H111 and H115. Residues 133-137 (VVSGG), D166, G179, D183, and N270 contribute to the substrate site. D298 contacts Fe cation.

Belongs to the KAE1 / TsaD family. Fe(2+) serves as cofactor.

The protein resides in the cytoplasm. The enzyme catalyses L-threonylcarbamoyladenylate + adenosine(37) in tRNA = N(6)-L-threonylcarbamoyladenosine(37) in tRNA + AMP + H(+). In terms of biological role, required for the formation of a threonylcarbamoyl group on adenosine at position 37 (t(6)A37) in tRNAs that read codons beginning with adenine. Is involved in the transfer of the threonylcarbamoyl moiety of threonylcarbamoyl-AMP (TC-AMP) to the N6 group of A37, together with TsaE and TsaB. TsaD likely plays a direct catalytic role in this reaction. The protein is tRNA N6-adenosine threonylcarbamoyltransferase of Persephonella marina (strain DSM 14350 / EX-H1).